Consider the following 306-residue polypeptide: Putative dihydroorotate dehydrogenase A (fumarate) (306 aa).

Residues serine 20 and 44–45 (KG) contribute to the FMN site. Substrate is bound by residues lysine 44 and 68–72 (NSIGL). FMN is bound by residues asparagine 98 and asparagine 126. Position 126 (asparagine 126) interacts with substrate. The Nucleophile role is filled by cysteine 129. FMN is bound by residues lysine 164 and isoleucine 190. Substrate is bound at residue 191–192 (NT). FMN contacts are provided by residues glycine 216, 244 to 245 (GG), and 266 to 267 (GT).

This sequence belongs to the dihydroorotate dehydrogenase family. Type 1 subfamily. As to quaternary structure, homodimer. It depends on FMN as a cofactor.

Its subcellular location is the cytoplasm. The catalysed reaction is (S)-dihydroorotate + fumarate = orotate + succinate. It participates in pyrimidine metabolism; UMP biosynthesis via de novo pathway. Its function is as follows. Catalyzes the conversion of dihydroorotate to orotate with fumarate as the electron acceptor. In Aquifex aeolicus (strain VF5), this protein is Putative dihydroorotate dehydrogenase A (fumarate) (pyrD).